The following is a 611-amino-acid chain: MSKRVLTSVAWPYANGPRHIGHVAGFGVPSDVFARYQRMIGNDVLMVSGTDEHGTPLLVQADKENTTVRELADRYNRIIVEDLVGLGLSYDLFTRTTTRNHYAIVQELFRGLNENGYMLKQTTRGAVSPSTGRTLPDRYIEGTCPLCGATDARGDQCDNCGNQLDPADLIDPRSKINGETPEFVDTEHFMLDLPALAEALEEWLKGRNDWRPNVLKFSLNLLKDIRPRAMSRDIDWGVPVPIEGWQDNNAKKLYVWFDAVVGYLSASIEWAWRTGDPEAWRKWWNDPEAVSYYFMGKDNITFHSQIWPGEMLGYAGKGSKGGEQGELGELNLPTEVVSSEFLTMSGSKFSSSKGVVIYVRDFLKEFGPDALRYFIAVAGPENTDTDFTWDEFVRRINSELANEWGNLVNRTASMAHKNFGEIPQPGEFTAEDQALLDEAKQAYTVVGDALQLSKFKAGMTEAMRIAARANQYIAAQEPWKLAKDETQRERLATVLYVALQVVSDVNTLMTPYLPFSAQKVFETLGGEGIWAAQPEIVEVKDESPYTPVGVGLPEEGSSYPVIMGNYTEQKAIWQRTELAPGTALSKPKPLFQKLDPELAETGPEWAPVVKD.

The 'HIGH' region signature appears at 12-22 (PYANGPRHIGH). Positions 144, 147, 157, and 160 each coordinate Zn(2+). Residues 348 to 352 (KFSSS) carry the 'KMSKS' region motif. S351 contributes to the ATP binding site.

Belongs to the class-I aminoacyl-tRNA synthetase family. MetG type 1 subfamily. Monomer. The cofactor is Zn(2+).

It localises to the cytoplasm. The enzyme catalyses tRNA(Met) + L-methionine + ATP = L-methionyl-tRNA(Met) + AMP + diphosphate. Is required not only for elongation of protein synthesis but also for the initiation of all mRNA translation through initiator tRNA(fMet) aminoacylation. The polypeptide is Methionine--tRNA ligase (Corynebacterium urealyticum (strain ATCC 43042 / DSM 7109)).